The following is a 229-amino-acid chain: MSLLAQLDQKIAANGGLIVSCQPVPDSPLDKPEIVAAMALAAEQAGAVAIRIEGVANQQATRAVVSVPIIGIVKRDLEDSPVRITAYIEDVDALAQAGADIIAIDGTDRPRPVPVETLLARIHHHGLLAMTDCSTPEDGLACQKLGAEIIGTTLSGYTTPETPEEPDLALVKTLSDAGCRVIAEGRYNTPAQAADAMRHGAWAVTVGSAITRLEHICQWYNTAMKKAVL.

It belongs to the NanE family.

It carries out the reaction an N-acyl-D-glucosamine 6-phosphate = an N-acyl-D-mannosamine 6-phosphate. It participates in amino-sugar metabolism; N-acetylneuraminate degradation; D-fructose 6-phosphate from N-acetylneuraminate: step 3/5. In terms of biological role, converts N-acetylmannosamine-6-phosphate (ManNAc-6-P) to N-acetylglucosamine-6-phosphate (GlcNAc-6-P). This Escherichia coli O139:H28 (strain E24377A / ETEC) protein is Putative N-acetylmannosamine-6-phosphate 2-epimerase.